The chain runs to 731 residues: Gene 24 protein (731 aa).

Belongs to the herpesviridae UL87 family.

The sequence is that of Gene 24 protein (24) from Saimiri sciureus (Common squirrel monkey).